A 242-amino-acid polypeptide reads, in one-letter code: Ribosomal RNA small subunit methyltransferase G (242 aa).

Residues glycine 79, 130–131 (VE), and glutamine 149 each bind S-adenosyl-L-methionine.

The protein belongs to the methyltransferase superfamily. RNA methyltransferase RsmG family.

Its subcellular location is the cytoplasm. Its function is as follows. Specifically methylates the N7 position of a guanine in 16S rRNA. The protein is Ribosomal RNA small subunit methyltransferase G of Mycoplasmoides gallisepticum (strain R(low / passage 15 / clone 2)) (Mycoplasma gallisepticum).